The sequence spans 74 residues: Conotoxin ca17a (74 aa).

The N-terminal stretch at 1–20 (MQKATVLLLALLLLLPLSTA) is a signal peptide. A propeptide spanning residues 21 to 40 (QDAEGSQEDAAQREVDIATR) is cleaved from the precursor. The residue at position 51 (Pro-51) is a 4-hydroxyproline.

Post-translationally, contains disulfide bonds. Expressed by the venom gland.

It is found in the secreted. This Conus caracteristicus (Characteristic cone) protein is Conotoxin ca17a.